Here is a 283-residue protein sequence, read N- to C-terminus: ATP synthase gamma chain (283 aa).

It belongs to the ATPase gamma chain family. F-type ATPases have 2 components, CF(1) - the catalytic core - and CF(0) - the membrane proton channel. CF(1) has five subunits: alpha(3), beta(3), gamma(1), delta(1), epsilon(1). CF(0) has three main subunits: a, b and c.

It localises to the cell membrane. Its function is as follows. Produces ATP from ADP in the presence of a proton gradient across the membrane. The gamma chain is believed to be important in regulating ATPase activity and the flow of protons through the CF(0) complex. The polypeptide is ATP synthase gamma chain (Clostridium perfringens (strain ATCC 13124 / DSM 756 / JCM 1290 / NCIMB 6125 / NCTC 8237 / Type A)).